The chain runs to 177 residues: Ribulose bisphosphate carboxylase small subunit, chloroplastic (177 aa).

A chloroplast-targeting transit peptide spans 1–55 (MASLMSNAAVVTASTAAQANMVAPFSGLKSTSAFPVSRKSNVDITSLATNGGRVN).

Belongs to the RuBisCO small chain family. As to quaternary structure, heterohexadecamer of 8 large and 8 small subunits.

It is found in the plastid. The protein resides in the chloroplast. Functionally, ruBisCO catalyzes two reactions: the carboxylation of D-ribulose 1,5-bisphosphate, the primary event in carbon dioxide fixation, as well as the oxidative fragmentation of the pentose substrate. Both reactions occur simultaneously and in competition at the same active site. Although the small subunit is not catalytic it is essential for maximal activity. The sequence is that of Ribulose bisphosphate carboxylase small subunit, chloroplastic from Silene latifolia subsp. alba (White campion).